A 502-amino-acid polypeptide reads, in one-letter code: Glutamate--tRNA ligase (502 aa).

A 'HIGH' region motif is present at residues 9–19 (PSPTGDPHVGT). Zn(2+) contacts are provided by Cys-106, Cys-108, Cys-133, and His-135. The short motif at 250-254 (KLSKR) is the 'KMSKS' region element. Lys-253 contributes to the ATP binding site.

This sequence belongs to the class-I aminoacyl-tRNA synthetase family. Glutamate--tRNA ligase type 1 subfamily. Monomer. Requires Zn(2+) as cofactor.

It localises to the cytoplasm. It carries out the reaction tRNA(Glu) + L-glutamate + ATP = L-glutamyl-tRNA(Glu) + AMP + diphosphate. Catalyzes the attachment of glutamate to tRNA(Glu) in a two-step reaction: glutamate is first activated by ATP to form Glu-AMP and then transferred to the acceptor end of tRNA(Glu). The protein is Glutamate--tRNA ligase of Protochlamydia amoebophila (strain UWE25).